The chain runs to 546 residues: Pre-mRNA-splicing factor 38B (546 aa).

A compositionally biased stretch (polar residues) spans 1 to 14; that stretch reads MANNSPALTGNSQP. Residues 1 to 40 are disordered; it reads MANNSPALTGNSQPQHQAAAAAAQQQQQCGGGGATKPAVS. N-acetylalanine is present on Ala2. Ser5 is subject to Phosphoserine. Residues 15–28 are compositionally biased toward low complexity; it reads QHQAAAAAAQQQQQ. The residue at position 227 (Lys227) is an N6-acetyllysine. The tract at residues 229-546 is disordered; it reads IDQQIKTRPR…KQHKNKDETV (318 aa). A compositionally biased stretch (basic and acidic residues) spans 243–255; the sequence is DGKEGAEEIDRHV. The span at 256-284 shows a compositional bias: basic residues; it reads ERRRSRSPRRSLSPRRSPRRSRSRSHHRE. 4 positions are modified to phosphoserine: Ser288, Ser290, Ser318, and Ser320. Residues 291-327 are compositionally biased toward basic and acidic residues; sequence FDRELEREKERQRLEREAKEREKERRRSRSIDRGLER. A coiled-coil region spans residues 292-321; it reads DRELEREKERQRLEREAKEREKERRRSRSI. The span at 328–344 shows a compositional bias: basic residues; that stretch reads RRSRSRERHRSRSRSRD. The segment covering 345-421 has biased composition (basic and acidic residues); it reads RKGDRRDRDR…HRDDKRDSKK (77 aa). Residues 422 to 450 show a composition bias toward basic residues; the sequence is EKKHSRSRSRERKHRSRSRSRNAGKRSRS. Ser448 carries the phosphoserine modification. The segment covering 451-468 has biased composition (basic and acidic residues); sequence RSKEKSSKHKNESKEKSN. Residues Ser473, Ser475, and Ser481 each carry the phosphoserine modification. A compositionally biased stretch (basic and acidic residues) spans 480–495; that stretch reads DSVEKSKKREHSPSKE. Positions 496–510 are enriched in basic residues; it reads KSRKRSRSKERSHKR. Basic and acidic residues predominate over residues 511–546; that stretch reads DHSDSKDQSDKHDRRRSQSIEQESQEKQHKNKDETV. Phosphoserine occurs at positions 527, 529, and 534.

It belongs to the PRP38 family.

The protein localises to the nucleus. Functionally, may be required for pre-mRNA splicing. The protein is Pre-mRNA-splicing factor 38B (PRPF38B) of Homo sapiens (Human).